The following is a 447-amino-acid chain: Glutamate--tRNA ligase 1 (447 aa).

The 'HIGH' region motif lies at 10-20 (PSPTGMLHVGN). A 'KMSKS' region motif is present at residues 240–244 (KISKR). Residue lysine 243 coordinates ATP.

The protein belongs to the class-I aminoacyl-tRNA synthetase family. Glutamate--tRNA ligase type 1 subfamily. As to quaternary structure, monomer.

Its subcellular location is the cytoplasm. The enzyme catalyses tRNA(Glu) + L-glutamate + ATP = L-glutamyl-tRNA(Glu) + AMP + diphosphate. Its function is as follows. Catalyzes the attachment of glutamate to tRNA(Glu) in a two-step reaction: glutamate is first activated by ATP to form Glu-AMP and then transferred to the acceptor end of tRNA(Glu). This is Glutamate--tRNA ligase 1 from Rickettsia rickettsii (strain Sheila Smith).